The following is a 283-amino-acid chain: Agmatinase (283 aa).

A divalent metal cation is bound by residues His112, Asp131, His133, Asp135, Asp211, and Asp213.

It belongs to the arginase family. Agmatinase subfamily. Homotetramer. The cofactor is a divalent metal cation.

It carries out the reaction agmatine + H2O = urea + putrescine. It participates in amine and polyamine biosynthesis; putrescine biosynthesis via agmatine pathway; putrescine from agmatine: step 1/1. Its activity is regulated as follows. Inhibited by putrescine. Activity is not affected by arginine and ornithine. In terms of biological role, catalyzes the formation of putrescine from agmatine. Cannot use arginine. The sequence is that of Agmatinase from Pyrococcus horikoshii (strain ATCC 700860 / DSM 12428 / JCM 9974 / NBRC 100139 / OT-3).